The primary structure comprises 1082 residues: Protein argonaute 1A (1082 aa).

Disordered regions lie at residues methionine 17–aspartate 148 and glycine 187–proline 208. Polar residues predominate over residues glycine 29–threonine 38. Gly residues predominate over residues glycine 72–proline 100. The region spanning proline 420–glutamate 533 is the PAZ domain. Positions leucine 709–glutamate 1030 constitute a Piwi domain. A disordered region spans residues serine 1036–valine 1065.

The protein belongs to the argonaute family. Ago subfamily.

Its function is as follows. Probably involved in the RNA silencing pathway. May bind to short RNAs such as microRNAs (miRNAs) or short interfering RNAs (siRNAs), and represses the translation of mRNAs which are complementary to them. The sequence is that of Protein argonaute 1A (AGO1A) from Oryza sativa subsp. japonica (Rice).